A 170-amino-acid chain; its full sequence is tRNA-splicing endonuclease (170 aa).

Residues tyrosine 106, histidine 116, and lysine 147 contribute to the active site.

The protein belongs to the tRNA-intron endonuclease family. Archaeal short subfamily. As to quaternary structure, homotetramer; although the tetramer contains four active sites, only two participate in the cleavage. Therefore, it should be considered as a dimer of dimers.

The catalysed reaction is pretRNA = a 3'-half-tRNA molecule with a 5'-OH end + a 5'-half-tRNA molecule with a 2',3'-cyclic phosphate end + an intron with a 2',3'-cyclic phosphate and a 5'-hydroxyl terminus.. Its function is as follows. Endonuclease that removes tRNA introns. Cleaves pre-tRNA at the 5'- and 3'-splice sites to release the intron. The products are an intron and two tRNA half-molecules bearing 2',3' cyclic phosphate and 5'-OH termini. Recognizes a pseudosymmetric substrate in which 2 bulged loops of 3 bases are separated by a stem of 4 bp. The protein is tRNA-splicing endonuclease of Methanothermobacter thermautotrophicus (strain ATCC 29096 / DSM 1053 / JCM 10044 / NBRC 100330 / Delta H) (Methanobacterium thermoautotrophicum).